We begin with the raw amino-acid sequence, 306 residues long: Tyrosine recombinase XerD (306 aa).

Positions 1 to 83 constitute a Core-binding (CB) domain; the sequence is MGFIAQFLEM…TIKSYYEFLI (83 aa). Residues 104 to 299 form the Tyr recombinase domain; that stretch reads KLPEILSIAQ…QTNHLKKALL (196 aa). Residues arginine 145, lysine 176, histidine 251, arginine 254, and histidine 277 contribute to the active site. Tyrosine 286 serves as the catalytic O-(3'-phospho-DNA)-tyrosine intermediate.

Belongs to the 'phage' integrase family. XerD subfamily. As to quaternary structure, forms a cyclic heterotetrameric complex composed of two molecules of XerC and two molecules of XerD.

It localises to the cytoplasm. Functionally, site-specific tyrosine recombinase, which acts by catalyzing the cutting and rejoining of the recombining DNA molecules. The XerC-XerD complex is essential to convert dimers of the bacterial chromosome into monomers to permit their segregation at cell division. It also contributes to the segregational stability of plasmids. The sequence is that of Tyrosine recombinase XerD from Rickettsia conorii (strain ATCC VR-613 / Malish 7).